We begin with the raw amino-acid sequence, 109 residues long: Probable guanidinium efflux system subunit GdnC (109 aa).

The next 4 helical transmembrane spans lie at 3-23 (WGSVILAALFEIGWVMGLKHA), 26-46 (ALEWICTAAAVVMSFYILVKA), 55-75 (VYAVFTGLGTAGTVVCEIALF), and 81-101 (IAKLALIGVLLCGVIGLKLVT).

This sequence belongs to the drug/metabolite transporter (DMT) superfamily. Small multidrug resistance (SMR) (TC 2.A.7.1) family. YkkC/YkkD subfamily. In terms of assembly, the efflux pump is composed of GdnC and GdnD.

The protein localises to the cell membrane. Its function is as follows. Probably involved in guanidinium transport. This Bacillus licheniformis (strain ATCC 14580 / DSM 13 / JCM 2505 / CCUG 7422 / NBRC 12200 / NCIMB 9375 / NCTC 10341 / NRRL NRS-1264 / Gibson 46) protein is Probable guanidinium efflux system subunit GdnC.